Here is a 1459-residue protein sequence, read N- to C-terminus: Mediator of RNA polymerase II transcription subunit 14 (1459 aa).

A disordered region spans residues 1–37 (MAPVQLDNHQLIPPGGGGGSSGGGGSSSGSASAPAPP). The span at 14–27 (PGGGGGSSGGGGSS) shows a compositional bias: gly residues. Residues 75–79 (LTDLL) carry the LXXLL motif 1 motif. The tract at residues 194-572 (KQATLHQLNQ…VPNKPTQLSY (379 aa)) is interaction with STAT2. The tract at residues 506–830 (LGQQRCKQSI…TKGSSISIQW (325 aa)) is interaction with SREBF1. Residues serine 623 and serine 992 each carry the phosphoserine modification. Residues 979–1171 (ARRRSVNEDD…NMPPPRKLPQ (193 aa)) form a disordered region. 2 stretches are compositionally biased toward polar residues: residues 1029–1059 (PPTS…SSPS) and 1097–1106 (DPSSPYTMVS). Phosphoserine is present on residues serine 1117, serine 1124, serine 1133, serine 1141, and serine 1149. Residues 1152-1161 (AGTSSQTMPT) show a composition bias toward polar residues. An LXXLL motif 2 motif is present at residues 1187–1191 (LNILL).

The protein belongs to the Mediator complex subunit 14 family. Component of the Mediator complex, which is composed of MED1, MED4, MED6, MED7, MED8, MED9, MED10, MED11, MED12, MED13, MED13L, MED14, MED15, MED16, MED17, MED18, MED19, MED20, MED21, MED22, MED23, MED24, MED25, MED26, MED27, MED29, MED30, MED31, CCNC, CDK8 and CDC2L6/CDK11. The MED12, MED13, CCNC and CDK8 subunits form a distinct module termed the CDK8 module. Mediator containing the CDK8 module is less active than Mediator lacking this module in supporting transcriptional activation. Individual preparations of the Mediator complex lacking one or more distinct subunits have been variously termed ARC, CRSP, DRIP, PC2, SMCC and TRAP. Interacts with AR, ESR1, SREBF1 and STAT2. Interacts with GATA1.

It is found in the nucleus. Functionally, component of the Mediator complex, a coactivator involved in the regulated transcription of nearly all RNA polymerase II-dependent genes. Mediator functions as a bridge to convey information from gene-specific regulatory proteins to the basal RNA polymerase II transcription machinery. Mediator is recruited to promoters by direct interactions with regulatory proteins and serves as a scaffold for the assembly of a functional preinitiation complex with RNA polymerase II and the general transcription factors. This chain is Mediator of RNA polymerase II transcription subunit 14 (Med14), found in Mus musculus (Mouse).